The primary structure comprises 1006 residues: MEGQSSRGSRRPGTRAGLGSLPMPQGVAQTGAPSKVDSSFQLPAKKNAALGPSEPRLALAPVGPRAAMSASSEGPRLALASPRPILAPLCTPEGQKTATAHRSSSLAPTSVGQLVMSASAGPKPPPATTGSVLAPTSLGLVMPASAGPRSPPVTLGPNLAPTSRDQKQEPPASVGPKPTLAASGLSLALASEEQPPELPSTPSPVPSPVLSPTQEQALAPASTASGAASVGQTSARKRDAPAPRPLPASEGHLQPPAQTSGPTGSPPCIQTSPDPRLSPSFRARPEALHSSPEDPVLPRPPQTLPLDVGQGPSEPGTHSPGLLSPTFRPGAPSGQTVPPPLPKPPRSPSRSPSHSPNRSPCVPPAPDMALPRLGTQSTGPGRCLSPNLQAQEAPAPVTTSSSTSTLSSSPWSAQPTWKSDPGFRITVVTWNVGTAMPPDDVTSLLHLGGGDDSDGADMIAIGLQEVNSMLNKRLKDALFTDQWSELFMDALGPFNFVLVSSVRMQGVILLLFAKYYHLPFLRDVQTDCTRTGLGGYWGNKGGVSVRLAAFGHMLCFLNCHLPAHMDKAEQRKDNFQTILSLQQFQGPGAQGILDHDLVFWFGDLNFRIESYDLHFVKFAIDSDQLHQLWEKDQLNMAKNTWPILKGFQEGPLNFAPTFKFDVGTNKYDTSAKKRKPAWTDRILWKVKAPGGGPSPSGRKSHRLQVTQHSYRSHMEYTVSDHKPVAAQFLLQFAFRDDMPLVRLEVADEWVRPEQAVVRYRMETVFARSSWDWIGLYRVGFRHCKDYVAYVWAKHEDVDGNTYQVTFSEESLPKGHGDFILGYYSHNHSILIGITEPFQISLPSSELASSSTDSSGTSSEGEDDSTLELLAPKSRSPSPGKSKRHRSRSPGLARFPGLALRPSSRERRGASRSPSPQSRRLSRVAPDRSSNGSSRGSSEEGPSGLPGPWAFPPAVPRSLGLLPALRLETVDPGGGGSWGPDREALAPNSLSPSPQGHRGLEEGGLGP.

Residues 1 to 416 (MEGQSSRGSR…SSSPWSAQPT (416 aa)) form a disordered region. Residues 27–41 (VAQTGAPSKVDSSFQ) show a composition bias toward polar residues. Residue arginine 56 is modified to Asymmetric dimethylarginine; alternate. Arginine 56 carries the post-translational modification Omega-N-methylarginine; alternate. At arginine 65 the chain carries Omega-N-methylarginine. An Asymmetric dimethylarginine modification is found at arginine 76. Position 83 is an asymmetric dimethylarginine; alternate (arginine 83). Residue arginine 83 is modified to Omega-N-methylarginine; alternate. A compositionally biased stretch (polar residues) spans 94–112 (GQKTATAHRSSSLAPTSVG). The RSXSXX motif 1 motif lies at 102–107 (RSSSLA). Residues 180–193 (LAASGLSLALASEE) are compositionally biased toward low complexity. The segment covering 196 to 209 (PELPSTPSPVPSPV) has biased composition (pro residues). The span at 210–234 (LSPTQEQALAPASTASGAASVGQTS) shows a compositional bias: low complexity. Residues 256–273 (PAQTSGPTGSPPCIQTSP) show a composition bias toward polar residues. A phosphoserine mark is found at serine 291 and serine 324. Pro residues predominate over residues 337-347 (VPPPLPKPPRS). Residues 345-350 (PRSPSR) carry the SH3-binding motif. 2 stretches are compositionally biased toward low complexity: residues 348–360 (PSRS…NRSP) and 398–409 (TTSSSTSTLSSS). The short motif at 350–355 (RSPSHS) is the RSXSXX motif 2 element. Positions 425-728 (ITVVTWNVGT…SDHKPVAAQF (304 aa)) are catalytic. Residues 729–840 (LLQFAFRDDM…IGITEPFQIS (112 aa)) form a required for ruffle localization region. Residues 844–858 (SELASSSTDSSGTSS) show a composition bias toward low complexity. Residues 844 to 1006 (SELASSSTDS…RGLEEGGLGP (163 aa)) are disordered. 2 short sequence motifs (RSXSXX motif) span residues 874–879 (RSPSPG) and 885–890 (RSRSPG). Position 903 is a phosphoserine (serine 903). The short motif at 911–916 (RSPSPQ) is the RSXSXX motif 5 element. Positions 927–946 (RSSNGSSRGSSEEGPSGLPG) are enriched in low complexity. Serine 990 bears the Phosphoserine mark.

Belongs to the inositol 1,4,5-trisphosphate 5-phosphatase type II family.

It is found in the cytoplasm. The catalysed reaction is 1D-myo-inositol 1,4,5-trisphosphate + H2O = 1D-myo-inositol 1,4-bisphosphate + phosphate. It catalyses the reaction 1D-myo-inositol 1,3,4,5-tetrakisphosphate + H2O = 1D-myo-inositol 1,3,4-trisphosphate + phosphate. It carries out the reaction a 1,2-diacyl-sn-glycero-3-phospho-(1D-myo-inositol-4,5-bisphosphate) + H2O = a 1,2-diacyl-sn-glycero-3-phospho-(1D-myo-inositol 4-phosphate) + phosphate. Its function is as follows. Inositol 5-phosphatase, which converts inositol 1,4,5-trisphosphate to inositol 1,4-bisphosphate. Also converts phosphatidylinositol 4,5-bisphosphate to phosphatidylinositol 4-phosphate and inositol 1,3,4,5-tetrakisphosphate to inositol 1,3,4-trisphosphate in vitro. May be involved in modulation of the function of inositol and phosphatidylinositol polyphosphate-binding proteins that are present at membranes ruffles. The polypeptide is Phosphatidylinositol 4,5-bisphosphate 5-phosphatase A (INPP5J) (Homo sapiens (Human)).